A 666-amino-acid polypeptide reads, in one-letter code: Putative L-type lectin-domain containing receptor kinase V.1 (666 aa).

An N-terminal signal peptide occupies residues Met-1–Cys-18. Residues Gln-19 to Thr-289 are Extracellular-facing. The interval Glu-27–Lys-257 is legume-lectin like. Residues Asn-29, Asn-74, Asn-123, Asn-176, Asn-204, and Asn-259 are each glycosylated (N-linked (GlcNAc...) asparagine). Residues Ile-290–Phe-310 form a helical membrane-spanning segment. The Cytoplasmic portion of the chain corresponds to Leu-311–Arg-666. One can recognise a Protein kinase domain in the interval Phe-344–Leu-625. ATP is bound by residues Leu-350–Val-358 and Lys-373. Catalysis depends on Asp-469, which acts as the Proton acceptor.

The protein in the C-terminal section; belongs to the protein kinase superfamily. Ser/Thr protein kinase family. In the N-terminal section; belongs to the leguminous lectin family.

It is found in the cell membrane. It catalyses the reaction L-seryl-[protein] + ATP = O-phospho-L-seryl-[protein] + ADP + H(+). The catalysed reaction is L-threonyl-[protein] + ATP = O-phospho-L-threonyl-[protein] + ADP + H(+). This chain is Putative L-type lectin-domain containing receptor kinase V.1 (LECRK51), found in Arabidopsis thaliana (Mouse-ear cress).